The sequence spans 98 residues: Feather keratin (98 aa).

An N-acetylalanine modification is found at Ala-1.

It belongs to the avian keratin family. As to quaternary structure, the avian keratins (F-ker, S-ker, C-ker and B-ker) are a complex mixture of very similar polypeptides.

The polypeptide is Feather keratin (Chroicocephalus novaehollandiae (Silver gull)).